A 390-amino-acid polypeptide reads, in one-letter code: RNA binding protein fox-1 homolog 2 (390 aa).

Positions 1–127 (MQNEPLTPGY…STPKRLHVSN (127 aa)) are disordered. Polar residues-rich tracts occupy residues 18–28 (SQGNQEPTTTP) and 65–95 (GEHN…SLTT). Residue His67 is modified to Phosphothreonine. The span at 97-117 (GGAQTDGQQSQTQSSENSESK) shows a compositional bias: low complexity. Positions 121–197 (KRLHVSNIPF…RKIEVNNATA (77 aa)) constitute an RRM domain. Gly249, Gly267, Phe268, Ala277, and Arg281 each carry omega-N-methylarginine. Arg297 and Arg329 each carry asymmetric dimethylarginine. An asymmetric dimethylarginine; alternate mark is found at Arg381 and Arg386. Omega-N-methylarginine; alternate occurs at positions 381 and 386.

Interacts with ER-alpha N-terminal activation domain. Interacts with RBPMS; the interaction allows cooperative assembly of stable cell-specific alternative splicing regulatory complexes.

Its subcellular location is the nucleus. The protein resides in the cytoplasm. RNA-binding protein that regulates alternative splicing events by binding to 5'-UGCAUGU-3' elements. Prevents binding of U2AF2 to the 3'-splice site. Regulates alternative splicing of tissue-specific exons and of differentially spliced exons during erythropoiesis. RNA-binding protein that seems to act as a coregulatory factor of ER-alpha. Together with RNA binding proteins RBPMS and MBNL1/2, activates vascular smooth muscle cells alternative splicing events. This Homo sapiens (Human) protein is RNA binding protein fox-1 homolog 2 (RBFOX2).